The primary structure comprises 374 residues: Beta-lytic metalloendopeptidase (374 aa).

Residues 1–24 (MKKISKAGLGLALVCALATIGGNA) form the signal peptide. Positions 25–195 (ARRATAQRRG…RQGRPGRAAV (171 aa)) are excised as a propeptide. The segment at 128 to 187 (PTRQGAGDAGPRQSAAGAVRAFRRQRAGGRAARRRRVPAGLRPPVQRTAPGQGGFGPLRQ) is disordered. Residues 148-164 (AFRRQRAGGRAARRRRV) show a composition bias toward basic residues. A disulfide bridge connects residues cysteine 261 and cysteine 307. Histidine 316 and histidine 318 together coordinate Zn(2+). Cysteine 351 and cysteine 364 are oxidised to a cystine.

Belongs to the peptidase M23A family. It depends on Zn(2+) as a cofactor.

It localises to the secreted. It catalyses the reaction Cleavage of N-acetylmuramoyl-|-Ala, and of the insulin B chain at 23-Gly-|-Phe-24 &gt; 18-Val-|-Cys(SO3H).. This chain is Beta-lytic metalloendopeptidase, found in Achromobacter lyticus.